The chain runs to 184 residues: Ribosome-recycling factor (184 aa).

The segment at 141–165 (DEKNGDITEDDLRSQTDDVQKATDN) is disordered.

The protein belongs to the RRF family.

It localises to the cytoplasm. Its function is as follows. Responsible for the release of ribosomes from messenger RNA at the termination of protein biosynthesis. May increase the efficiency of translation by recycling ribosomes from one round of translation to another. This is Ribosome-recycling factor from Staphylococcus epidermidis (strain ATCC 35984 / DSM 28319 / BCRC 17069 / CCUG 31568 / BM 3577 / RP62A).